Reading from the N-terminus, the 237-residue chain is uncharacterized protein (237 aa).

A signal peptide spans 1–28; it reads MVFSFSTFNRLVTFTVMAAIVSVRPLTA.

This is an uncharacterized protein from Sinorhizobium fredii (strain NBRC 101917 / NGR234).